Consider the following 658-residue polypeptide: Threonine--tRNA ligase (658 aa).

The TGS domain occupies 1–64; it reads MSCSISLSFP…GQSGQVEIIT (64 aa). Positions 246 to 549 are catalytic; the sequence is DHRRLGREMD…LIENFAGHMP (304 aa). Cysteine 343, histidine 394, and histidine 526 together coordinate Zn(2+).

Belongs to the class-II aminoacyl-tRNA synthetase family. As to quaternary structure, homodimer. Zn(2+) is required as a cofactor.

Its subcellular location is the cytoplasm. The enzyme catalyses tRNA(Thr) + L-threonine + ATP = L-threonyl-tRNA(Thr) + AMP + diphosphate + H(+). Its function is as follows. Catalyzes the attachment of threonine to tRNA(Thr) in a two-step reaction: L-threonine is first activated by ATP to form Thr-AMP and then transferred to the acceptor end of tRNA(Thr). Also edits incorrectly charged L-seryl-tRNA(Thr). The polypeptide is Threonine--tRNA ligase (Bartonella tribocorum (strain CIP 105476 / IBS 506)).